The chain runs to 1262 residues: SCL-interrupting locus protein homolog (1262 aa).

An interaction with RBM14 region spans residues 1-992; sequence MNTRFPSSKM…IDSPTKVKKN (992 aa). An interaction with CPAP region spans residues 220–762; sequence YKHGYITMDE…VSMEAQSSPG (543 aa). 3 disordered regions span residues 369–409, 454–551, and 650–670; these read RSSQ…QKIS, LCDA…LAPQ, and GGMGAYSPHSNGEPSPVAGPS. Composition is skewed to polar residues over residues 473 to 493, 500 to 512, and 540 to 551; these read PTNQLSQDTALRQSRGKQSST, QFRNTNAKPSLSV, and TLDSRQPSLAPQ. Residues 567–760 form a PIN1-binding region; that stretch reads PMELQVPTPS…ELVSMEAQSS (194 aa). A phosphoserine mark is found at S733 and S760. Disordered stretches follow at residues 782 to 804, 883 to 904, 925 to 959, and 1106 to 1129; these read NAAGDDQEPDSQPKQDDTKISSE, APTEGASNSTELPQGTKDEPYR, NASQETEEPPTKAVVTNRECAKTQNTHHARKKRHN, and SSDNSEDEEEPPSHADSESDHVLN. The segment covering 792-803 has biased composition (basic and acidic residues); it reads SQPKQDDTKISS. The span at 883–895 shows a compositional bias: polar residues; that stretch reads APTEGASNSTELP. A compositionally biased stretch (basic residues) spans 949-959; that stretch reads NTHHARKKRHN. A Phosphoserine modification is found at S1110. The segment covering 1116 to 1128 has biased composition (basic and acidic residues); it reads PPSHADSESDHVL.

In terms of assembly, homodimer. Interacts with PIN1 via its WW domain. This interaction is dependent on Stil mitotic phosphorylation. Interacts with CPAP. Interacts with RBM14 and this interaction interferes with the interaction of STIL with CPAP. Forms a complex with CPAP and SASS6. nteracts (via N-terminus) with CEP85; this interaction is essential for efficient centriolar targeting of STIL and subsequent PLK4 activation. Post-translationally, ubiquitinated. Phosphorylated following the activation of the mitotic checkpoint. As to expression, ubiquitously expressed in adult and fetal tissues. Highly expressed in hematopoietic tissues such as thymus, bone marrow and spleen.

It localises to the cytoplasm. The protein resides in the cytosol. It is found in the cytoskeleton. Its subcellular location is the microtubule organizing center. The protein localises to the centrosome. It localises to the centriole. The protein resides in the cell cortex. Its function is as follows. Immediate-early gene. Plays an important role in embryonic development as well as in cellular growth and proliferation; its long-term silencing affects cell survival and cell cycle distribution as well as decreases CDK1 activity correlated with reduced phosphorylation of CDK1. Plays a role as a positive regulator of the sonic hedgehog pathway, acting downstream of PTCH1. Plays an important role in the regulation of centriole duplication. Required for the onset of procentriole formation and proper mitotic progression. During procentriole formation, is essential for the correct loading of SASS6 and CPAP to the base of the procentriole to initiate procentriole assembly. In complex with STIL acts as a modulator of PLK4-driven cytoskeletal rearrangements and directional cell motility. The chain is SCL-interrupting locus protein homolog (Stil) from Mus musculus (Mouse).